A 1469-amino-acid chain; its full sequence is ATP-binding cassette transporter abc4 (1469 aa).

The next 8 helical transmembrane spans lie at 21–40 (SLYY…FPTH), 55–74 (YSLE…RWIT), 94–114 (HGIL…FMFV), 121–141 (AFSD…LFLL), 160–180 (VLLN…PFFF), 189–209 (YSPF…IPLF), 296–316 (ILGM…SPIA), and 337–357 (WIVL…FYLF). Positions 296–580 (ILGMGVSSFM…IAYLMRQIVQ (285 aa)) constitute an ABC transmembrane type-1 1 domain. Asn386 is a glycosylation site (N-linked (GlcNAc...) asparagine). 2 helical membrane passes run 412 to 432 (EFIH…YLLQ) and 441 to 461 (VGLA…PLVA). The N-linked (GlcNAc...) asparagine glycan is linked to Asn510. 2 helical membrane passes run 524–544 (VLVE…FTTI) and 553–573 (IAFT…WIAY). The 230-residue stretch at 611–840 (IGFFNASLTW…LAEQAASASE (230 aa)) folds into the ABC transporter 1 domain. N-linked (GlcNAc...) asparagine glycosylation occurs at Asn615. ATP is bound at residue 648 to 655 (GPTGSGKS). N-linked (GlcNAc...) asparagine glycosylation is found at Asn691, Asn790, and Asn815. The chain crosses the membrane as a helical span at residues 894–914 (GFYVAAVLLFFVTTQATSILI). The 280-residue stretch at 897 to 1176 (VAAVLLFFVT…FVRSCNSLQA (280 aa)) folds into the ABC transmembrane type-1 2 domain. Residue Asn923 is glycosylated (N-linked (GlcNAc...) asparagine). Residues 936 to 956 (FLFVYGTMLLAYSLLDFLRTV) traverse the membrane as a helical segment. Asn1007 carries an N-linked (GlcNAc...) asparagine glycan. 5 helical membrane-spanning segments follow: residues 1009-1029 (SGWL…ILSV), 1033-1053 (MPIF…FGLL), 1065-1085 (ISIY…GVSV), 1120-1140 (VAVR…LIAL), and 1148-1168 (GVVG…LLFV). Residues 1214 to 1453 (FNHVSVSYSA…NGHFRRMCDG (240 aa)) enclose the ABC transporter 2 domain. 1246 to 1253 (GRTGSGKS) contributes to the ATP binding site. Asn1355 carries N-linked (GlcNAc...) asparagine glycosylation.

Belongs to the ABC transporter superfamily. ABCC family. Conjugate transporter (TC 3.A.1.208) subfamily.

It is found in the vacuole membrane. It carries out the reaction ATP + H2O + xenobioticSide 1 = ADP + phosphate + xenobioticSide 2.. Its function is as follows. Involved in detoxification of xenobiotics, and vacuolar sequestration of glutathione S-conjugates. Together with abc2, required for accumulation of a red pigment (ade pigment) in the vacuole of a mutant affected in the adenine biosynthetic pathway. In Schizosaccharomyces pombe (strain 972 / ATCC 24843) (Fission yeast), this protein is ATP-binding cassette transporter abc4.